A 246-amino-acid chain; its full sequence is Ribonuclease 3 (246 aa).

Residues 20–145 (FSKLEKILGF…FVGAIYLDRG (126 aa)) form the RNase III domain. Glutamate 62 lines the Mg(2+) pocket. Aspartate 66 is an active-site residue. Asparagine 131 and glutamate 134 together coordinate Mg(2+). Glutamate 134 is a catalytic residue. The 69-residue stretch at 173 to 241 (SYKSLLIEWC…SKRGYFVFQS (69 aa)) folds into the DRBM domain.

This sequence belongs to the ribonuclease III family. As to quaternary structure, homodimer. It depends on Mg(2+) as a cofactor.

It is found in the cytoplasm. The enzyme catalyses Endonucleolytic cleavage to 5'-phosphomonoester.. Its function is as follows. Digests double-stranded RNA. Involved in the processing of primary rRNA transcript to yield the immediate precursors to the large and small rRNAs (23S and 16S). Processes some mRNAs, and tRNAs when they are encoded in the rRNA operon. Processes pre-crRNA and tracrRNA of type II CRISPR loci if present in the organism. This Flavobacterium psychrophilum (strain ATCC 49511 / DSM 21280 / CIP 103535 / JIP02/86) protein is Ribonuclease 3.